A 310-amino-acid polypeptide reads, in one-letter code: Transcription initiation factor IIB (310 aa).

The TFIIB-type zinc finger occupies 9 to 41 (DKQTVCPECGSTELIGDYERAEVVCAHCGLVID). C14, C17, C33, and C36 together coordinate Zn(2+). 2 consecutive repeat copies span residues 127-210 (SELD…TREL) and 221-302 (DYVP…ELTE).

The protein belongs to the TFIIB family.

Stabilizes TBP binding to an archaeal box-A promoter. Also responsible for recruiting RNA polymerase II to the pre-initiation complex (DNA-TBP-TFIIB). This is Transcription initiation factor IIB from Methanobrevibacter smithii (strain ATCC 35061 / DSM 861 / OCM 144 / PS).